The sequence spans 759 residues: Zinc finger protein 287 (759 aa).

The 83-residue stretch at 42-124 (RRNFRNFPYP…ALVEDLTQIL (83 aa)) folds into the SCAN box domain. A disordered region spans residues 127–154 (EEAPQSSALPQDTPEDDPNHDPNPASQA). Residues 166-234 (VTFNDVAVDI…IKEIVEGPNP (69 aa)) enclose the KRAB domain. C2H2-type zinc fingers lie at residues 366-388 (YSCN…RENH), 394-416 (YECE…QRMH), 422-444 (YECH…QRIH), 450-472 (YKCE…QRTH), 478-500 (YKCL…QRVH), 506-528 (YICN…QKIH), 534-556 (YKCN…QRIH), 562-584 (YKCT…QTTH), 590-612 (YICN…HRTH), 618-640 (YKCS…QRIH), 646-668 (FKCN…QRVH), 674-696 (YKCH…RRTH), 702-724 (YKCS…QRIH), and 730-752 (YGCR…QRVH).

It belongs to the krueppel C2H2-type zinc-finger protein family. In terms of tissue distribution, expressed in brain and at low levels in kidney and spleen and few hematopoietic cell lines.

The protein resides in the nucleus. In terms of biological role, may be involved in transcriptional regulation. In Mus musculus (Mouse), this protein is Zinc finger protein 287.